The primary structure comprises 237 residues: Putative anti-FlhC(2)FlhD(4) factor YdiV (237 aa).

Residues 1–237 form the EAL domain; it reads MKIFLENLYH…INQITTLVQR (237 aa).

Belongs to the YdiV family.

Functionally, upon overexpression acts as a novel anti-FlhC(2)FlhD(4) factor, decreasing its DNA-binding activity, able to negatively regulate expression of flagellar class II operons including FliC. The protein is Putative anti-FlhC(2)FlhD(4) factor YdiV (ydiV) of Escherichia coli (strain K12).